The following is a 211-amino-acid chain: MQVYPKFMRSAMATEHFPPVTAPEFAFLGRSNVGKSSLINALLGSKQAKVSSTPGRTRAINFFSLTTSPERQQPNFLFADLPGYGYAKISKSISAEWPKFIEPYLAERPSLALCLCLVDSNIPPQPSDAQLTEFLRSIGRPYLVVATKADRLSGNGRTKAKQTLSRALEAENLLLCSAKTGLGMKELWGEIHRVAAEATEAMKQNQRPPSA.

The 177-residue stretch at 21–197 folds into the EngB-type G domain; the sequence is TAPEFAFLGR…WGEIHRVAAE (177 aa). GTP is bound by residues 29 to 36, 55 to 59, 80 to 83, 147 to 150, and 176 to 178; these read GRSNVGKS, GRTRA, DLPG, TKAD, and CSA. Mg(2+)-binding residues include Ser-36 and Thr-57.

The protein belongs to the TRAFAC class TrmE-Era-EngA-EngB-Septin-like GTPase superfamily. EngB GTPase family. Mg(2+) is required as a cofactor.

Its function is as follows. Necessary for normal cell division and for the maintenance of normal septation. This is Probable GTP-binding protein EngB from Acidobacterium capsulatum (strain ATCC 51196 / DSM 11244 / BCRC 80197 / JCM 7670 / NBRC 15755 / NCIMB 13165 / 161).